A 392-amino-acid chain; its full sequence is Monooxygenase AgnR1 (392 aa).

Positions 1–20 (MSAPQKCAAVVVGAGPAGLA) are cleaved as a signal peptide. Asparagine 134 carries N-linked (GlcNAc...) asparagine glycosylation.

In terms of biological role, monooxygenase; part of the gene cluster that mediates the biosynthesis of agnestins, dihydroxy-xanthone metabolites. The pathway begins with the assembly and cyclization of atrochrysone thioester by the non-reducing polyketide synthase Agnpks1. The atrochrysone carboxyl ACP thioesterase AgnL7 then breaks the thioester bond and releases the atrochrysone carboxylic acid as the first enzyme-free intermediate. The decarboxylase AgnL1 then catalyzes the concerted decarboxylation-elimination required to convert atochrysone carboxylic acid into emodin anthrone, which is further oxidized to emodin by the anthrone oxygenase AgnL2. Emodin then undergoes reduction catalyzed by the oxidoreductase AgnL4 to yield the dihydroquinone tautomer which is the substrate for reduction by the short chain dehydrogenase AgnL6 reduction to produce hydroxyketone, followed by AgnL8 dehydration and likely spontaneous autoxidation to chrysophanol. Baeyer-Villiger oxidation by the oxidase AgnL3 leads to monodictyphenone via cleavage of the C-10/C-10a bond of chrysophanol. Alternative cleavage at the C-4a/C-10 bond of chrysophanol also leads to the formation some cephalone F. Further conversion to agnestins A and B, requires reduction to dihydro-monodictyphenone, oxidation to agnestin C probably via an epoxide, and rearrangement to either agnestin A or agnestin B directly, although agnestin A or agnestin B can also interconvert. Within the cluster, AgnR1 is the only unassigned oxidoreductase present which could be involved in this conversion. However, AgnR1 seems not to be involved in this step, and thus genes involved in the proposed oxidation/reduction may be located elsewhere on the genome. Further agnestin A derivatives are probably formed by spontaneous decarboxylations, dehydrations and methanolysis reactions. This is Monooxygenase AgnR1 from Paecilomyces divaricatus (Penicillium divaricatum).